The following is a 549-amino-acid chain: Glucose-6-phosphate isomerase (549 aa).

Glutamate 354 (proton donor) is an active-site residue. Active-site residues include histidine 385 and lysine 513.

The protein belongs to the GPI family.

The protein resides in the cytoplasm. The enzyme catalyses alpha-D-glucose 6-phosphate = beta-D-fructose 6-phosphate. It participates in carbohydrate biosynthesis; gluconeogenesis. The protein operates within carbohydrate degradation; glycolysis; D-glyceraldehyde 3-phosphate and glycerone phosphate from D-glucose: step 2/4. Its function is as follows. Catalyzes the reversible isomerization of glucose-6-phosphate to fructose-6-phosphate. This Nitrosococcus oceani (strain ATCC 19707 / BCRC 17464 / JCM 30415 / NCIMB 11848 / C-107) protein is Glucose-6-phosphate isomerase.